The chain runs to 139 residues: D-ribose pyranase (139 aa).

The active-site Proton donor is the His-20. Residues Asp-28, His-106, and 128–130 (YAN) each bind substrate.

It belongs to the RbsD / FucU family. RbsD subfamily. Homodecamer.

It is found in the cytoplasm. It catalyses the reaction beta-D-ribopyranose = beta-D-ribofuranose. The protein operates within carbohydrate metabolism; D-ribose degradation; D-ribose 5-phosphate from beta-D-ribopyranose: step 1/2. Its function is as follows. Catalyzes the interconversion of beta-pyran and beta-furan forms of D-ribose. The chain is D-ribose pyranase from Pectobacterium atrosepticum (strain SCRI 1043 / ATCC BAA-672) (Erwinia carotovora subsp. atroseptica).